The following is a 499-amino-acid chain: CD-NTase-associated protein 4 (499 aa).

The interval 1–226 (MATSVLANWH…DFRFDGAARA (226 aa)) is N-terminal endonuclease domain. Residues Asp49 and Gln72 contribute to the active site. Asp49 is a Mg(2+) binding site. Ile73 is a Mg(2+) binding site. Lys74 is an active-site residue. Residues 258–464 (FRNVALRSFS…HIFSAAPNAV (207 aa)) form a C-terminal SAVED domain region.

It belongs to the Cap4 nuclease family. As to quaternary structure, a monomer in the absence of ligand, in its presence it forms oligomers. Requires Mg(2+) as cofactor.

Its activity is regulated as follows. DNase activity is activated upon ligand binding (cAAG). Inhibited by EDTA. Effector DNase of a CBASS antivirus system. CBASS (cyclic oligonucleotide-based antiphage signaling system) provides immunity against bacteriophages. The CD-NTase protein (CdnD) synthesizes cyclic nucleotides in response to infection; these serve as specific second messenger signals. The signals activate a diverse range of effectors, leading to bacterial cell death and thus abortive phage infection. A type II-C(AAG) CBASS system. Its function is as follows. Binds second messenger 3',3',3'-cyclic AMP-AMP-GMP (cAAG). In the presence of cAAG (synthesized by the cognate CD-NTase protein in the CBASS operon), endonucleolytically degrades dsDNA to approximately 17 bp length fragments, with a preference for 5'-C|NG sites. Only binds DNA in the presence of cAAG. Not activated by c-di-AMP, c-di-GMP, 3',3'-cyclic GMP-AMP (cGAMP) or the second messenger of A.baumanii strain ATCC 27244. In terms of biological role, protects E.coli against phage T2 infection. When the cdnD-cap2-cap3-cap4 operon is introduced in E.coli there is a more than 10(3) decrease in the efficiency of T2 plaque formation. The operon does not protect against phage T5 and only about 10-fold against T7. Expression of cdnD-cap4 alone protects E.coli against phage T2 infection. The protein is CD-NTase-associated protein 4 of Enterobacter hormaechei subsp. hoffmannii (strain UCI 50).